The chain runs to 266 residues: Putative hydro-lyase VF_1377 (266 aa).

The protein belongs to the D-glutamate cyclase family.

This Aliivibrio fischeri (strain ATCC 700601 / ES114) (Vibrio fischeri) protein is Putative hydro-lyase VF_1377.